The following is a 389-amino-acid chain: Phospho-N-acetylmuramoyl-pentapeptide-transferase (389 aa).

10 helical membrane passes run 25–45, 74–94, 97–117, 134–154, 190–210, 222–242, 259–279, 286–306, 311–331, and 366–386; these read RAVM…PFVI, MGGV…ADWG, FIWI…VDDY, FFWQ…SVSE, ISYP…IVGS, GLVI…AYVM, AGEL…FLWF, VFMG…IAVI, IVLF…MLQV, and QVVV…LSTL.

Belongs to the glycosyltransferase 4 family. MraY subfamily. The cofactor is Mg(2+).

It localises to the cell inner membrane. It carries out the reaction UDP-N-acetyl-alpha-D-muramoyl-L-alanyl-gamma-D-glutamyl-meso-2,6-diaminopimeloyl-D-alanyl-D-alanine + di-trans,octa-cis-undecaprenyl phosphate = di-trans,octa-cis-undecaprenyl diphospho-N-acetyl-alpha-D-muramoyl-L-alanyl-D-glutamyl-meso-2,6-diaminopimeloyl-D-alanyl-D-alanine + UMP. It participates in cell wall biogenesis; peptidoglycan biosynthesis. Catalyzes the initial step of the lipid cycle reactions in the biosynthesis of the cell wall peptidoglycan: transfers peptidoglycan precursor phospho-MurNAc-pentapeptide from UDP-MurNAc-pentapeptide onto the lipid carrier undecaprenyl phosphate, yielding undecaprenyl-pyrophosphoryl-MurNAc-pentapeptide, known as lipid I. This Ralstonia pickettii (strain 12J) protein is Phospho-N-acetylmuramoyl-pentapeptide-transferase.